Here is a 472-residue protein sequence, read N- to C-terminus: 3-isopropylmalate dehydratase large subunit (472 aa).

The [4Fe-4S] cluster site is built by Cys-347, Cys-407, and Cys-410.

The protein belongs to the aconitase/IPM isomerase family. LeuC type 1 subfamily. Heterodimer of LeuC and LeuD. The cofactor is [4Fe-4S] cluster.

The enzyme catalyses (2R,3S)-3-isopropylmalate = (2S)-2-isopropylmalate. Its pathway is amino-acid biosynthesis; L-leucine biosynthesis; L-leucine from 3-methyl-2-oxobutanoate: step 2/4. Catalyzes the isomerization between 2-isopropylmalate and 3-isopropylmalate, via the formation of 2-isopropylmaleate. The polypeptide is 3-isopropylmalate dehydratase large subunit (Opitutus terrae (strain DSM 11246 / JCM 15787 / PB90-1)).